Consider the following 130-residue polypeptide: Protein ApaG (130 aa).

The ApaG domain maps to 3–127 (SAVTRGIEVT…FSLDVPEQRR (125 aa)).

In Brucella suis biovar 1 (strain 1330), this protein is Protein ApaG.